The primary structure comprises 597 residues: Glutamine--fructose-6-phosphate aminotransferase [isomerizing] (597 aa).

The active-site Nucleophile; for GATase activity is Cys2. Positions 2 to 218 (CGIVGYIGDS…ENSVGQISLE (217 aa)) constitute a Glutamine amidotransferase type-2 domain. SIS domains lie at 276-416 (IDPE…QLGT) and 449-587 (LSKR…VDHP). Lys592 functions as the For Fru-6P isomerization activity in the catalytic mechanism.

As to quaternary structure, homodimer.

Its subcellular location is the cytoplasm. The catalysed reaction is D-fructose 6-phosphate + L-glutamine = D-glucosamine 6-phosphate + L-glutamate. Its function is as follows. Catalyzes the first step in hexosamine metabolism, converting fructose-6P into glucosamine-6P using glutamine as a nitrogen source. This chain is Glutamine--fructose-6-phosphate aminotransferase [isomerizing], found in Helicobacter pylori (strain J99 / ATCC 700824) (Campylobacter pylori J99).